A 196-amino-acid polypeptide reads, in one-letter code: Phosphoheptose isomerase (196 aa).

Residues 36–196 (MVACLMNEGK…AVDYMLLGGD (161 aa)) form the SIS domain. Substrate is bound at residue 51–53 (NGG). Zn(2+)-binding residues include histidine 60 and glutamate 64. Substrate-binding positions include glutamate 64, 93-94 (ND), 119-121 (STS), serine 124, and glutamine 174. Zn(2+) contacts are provided by glutamine 174 and histidine 182.

Belongs to the SIS family. GmhA subfamily. Homotetramer. Zn(2+) serves as cofactor.

The protein localises to the cytoplasm. It catalyses the reaction 2 D-sedoheptulose 7-phosphate = D-glycero-alpha-D-manno-heptose 7-phosphate + D-glycero-beta-D-manno-heptose 7-phosphate. Its pathway is carbohydrate biosynthesis; D-glycero-D-manno-heptose 7-phosphate biosynthesis; D-glycero-alpha-D-manno-heptose 7-phosphate and D-glycero-beta-D-manno-heptose 7-phosphate from sedoheptulose 7-phosphate: step 1/1. Its function is as follows. Catalyzes the isomerization of sedoheptulose 7-phosphate in D-glycero-D-manno-heptose 7-phosphate. This is Phosphoheptose isomerase from Laribacter hongkongensis (strain HLHK9).